We begin with the raw amino-acid sequence, 103 residues long: Histone H4 (103 aa).

Gly residues predominate over residues 1-14 (MSGRGKGGKGLGKG). The tract at residues 1-20 (MSGRGKGGKGLGKGGAKRHR) is disordered. Position 6 is an N6-acetyl-N6-methyllysine; alternate (K6). N6-acetyllysine; alternate is present on residues K6, K9, and K13. K6, K9, and K13 each carry N6-methyllysine; alternate. Residues K9 and K13 each carry the N6-butyryllysine; alternate modification. N6-acetyl-N6-methyllysine; alternate is present on K13. K17 bears the N6-acetyllysine mark. The DNA-binding element occupies 17 to 21 (KRHRK). K32 is subject to N6-succinyllysine. R56 is subject to Omega-N-methylarginine. A phosphoserine mark is found at S61 and S65. The residue at position 78 (K78) is an N6-succinyllysine. K80 carries the N6-acetyllysine modification. K92 bears the N6-glutaryllysine mark.

It belongs to the histone H4 family. In terms of assembly, the nucleosome is a histone octamer containing two molecules each of H2A, H2B, H3 and H4 assembled in one H3-H4 heterotetramer and two H2A-H2B heterodimers. The octamer wraps approximately 147 bp of DNA. Histone H4 is a component of the UAF (upstream activation factor) complex which consists of UAF30, RRN5, RRN9, RRN10, and histones H3 and H4. Glutarylation at Lys-92 (H4K91glu) destabilizes nucleosomes by promoting dissociation of the H2A-H2B dimers from nucleosomes.

The protein resides in the nucleus. It is found in the chromosome. In terms of biological role, core component of nucleosome. Nucleosomes wrap and compact DNA into chromatin, limiting DNA accessibility to the cellular machineries which require DNA as a template. Histones thereby play a central role in transcription regulation, DNA repair, DNA replication and chromosomal stability. DNA accessibility is regulated via a complex set of post-translational modifications of histones, also called histone code, and nucleosome remodeling. Component of the UAF (upstream activation factor) complex which interacts with the upstream element of the RNA polymerase I promoter and forms a stable preinitiation complex. Together with SPT15/TBP UAF seems to stimulate basal transcription to a fully activated level. This is Histone H4 (HHF1) from Saccharomyces cerevisiae (strain ATCC 204508 / S288c) (Baker's yeast).